Here is a 418-residue protein sequence, read N- to C-terminus: L-rhamnose isomerase (418 aa).

3 residues coordinate Mn(2+): histidine 262, aspartate 294, and aspartate 296.

The protein belongs to the rhamnose isomerase family. As to quaternary structure, homotetramer. Mn(2+) is required as a cofactor.

The protein localises to the cytoplasm. It catalyses the reaction L-rhamnopyranose = L-rhamnulose. The protein operates within carbohydrate degradation; L-rhamnose degradation; glycerone phosphate from L-rhamnose: step 1/3. Functionally, catalyzes the interconversion of L-rhamnose and L-rhamnulose. This chain is L-rhamnose isomerase, found in Yersinia pseudotuberculosis serotype IB (strain PB1/+).